Reading from the N-terminus, the 328-residue chain is tRNA uridine(34) hydroxylase (328 aa).

One can recognise a Rhodanese domain in the interval 130–224 (LDEDTVVLDT…YGKDPEVQGE (95 aa)). The active-site Cysteine persulfide intermediate is the Cys184.

The protein belongs to the TrhO family.

It catalyses the reaction uridine(34) in tRNA + AH2 + O2 = 5-hydroxyuridine(34) in tRNA + A + H2O. In terms of biological role, catalyzes oxygen-dependent 5-hydroxyuridine (ho5U) modification at position 34 in tRNAs. This is tRNA uridine(34) hydroxylase from Streptococcus sanguinis (strain SK36).